The primary structure comprises 928 residues: Neuropilin-1 (928 aa).

The N-terminal stretch at Met-1–Ala-21 is a signal peptide. The Extracellular segment spans residues Ser-22 to Pro-860. 3 cysteine pairs are disulfide-bonded: Cys-27–Cys-54, Cys-82–Cys-104, and Cys-147–Cys-173. CUB domains are found at residues Cys-27–Phe-141 and Cys-147–Val-265. N-linked (GlcNAc...) asparagine glycosylation occurs at Asn-150. Residues Glu-195, Asp-209, and Asp-250 each coordinate Ca(2+). Cys-206 and Cys-228 are disulfide-bonded. N-linked (GlcNAc...) asparagine glycosylation is found at Asn-261, Asn-300, and Asn-523. 2 disulfide bridges follow: Cys-275-Cys-424 and Cys-431-Cys-584. F5/8 type C domains lie at Cys-275 to Cys-424 and Cys-431 to Cys-584. An O-linked (Xyl...) (chondroitin sulfate) serine; alternate glycan is attached at Ser-613. Ser-613 carries O-linked (Xyl...) (heparan sulfate) serine; alternate glycosylation. The disordered stretch occupies residues Gly-624–Thr-645. The span at Ala-625 to Val-635 shows a compositional bias: polar residues. The region spanning His-646–Ala-812 is the MAM domain. Ser-834 is a glycosylation site (O-linked (Xyl...) (chondroitin sulfate) serine). Asn-844 carries an N-linked (GlcNAc...) asparagine glycan. Residues Ile-861–Leu-883 traverse the membrane as a helical segment. Residues Tyr-884 to Ser-928 are Cytoplasmic-facing.

This sequence belongs to the neuropilin family. In terms of assembly, homodimer, and heterodimer. Retinal ganglion cells and visual center neurons.

It localises to the mitochondrion membrane. The protein localises to the cell membrane. Functionally, receptor involved in the development of the cardiovascular system, in angiogenesis, in the formation of certain neuronal circuits and in organogenesis outside the nervous system. Mediates the chemorepulsant activity of semaphorins. Binding to VEGFA initiates a signaling pathway needed for motor neuron axon guidance and cell body migration, including for the caudal migration of facial motor neurons from rhombomere 4 to rhombomere 6 during embryonic development. Regulates mitochondrial iron transport via interaction. In Xenopus laevis (African clawed frog), this protein is Neuropilin-1 (nrp1).